Reading from the N-terminus, the 447-residue chain is Rab GDP dissociation inhibitor alpha (447 aa).

A Phosphoserine modification is found at Ser427.

The protein belongs to the Rab GDI family. Interacts with RHOH. Interacts with the non-phosphorylated forms of RAB1A, RAB3A, RAB5A, RAB5B, RAB5C, RAB8A, RAB8B, RAB10, RAB12, RAB35, and RAB43.

It is found in the cytoplasm. Its subcellular location is the golgi apparatus. The protein resides in the trans-Golgi network. Its function is as follows. Regulates the GDP/GTP exchange reaction of most Rab proteins by inhibiting the dissociation of GDP from them, and the subsequent binding of GTP to them. Promotes the dissociation of GDP-bound Rab proteins from the membrane and inhibits their activation. Promotes the dissociation of RAB1A, RAB3A, RAB5A and RAB10 from membranes. The chain is Rab GDP dissociation inhibitor alpha (GDI1) from Canis lupus familiaris (Dog).